The chain runs to 420 residues: UDP-N-acetyl-D-mannosamine dehydrogenase (420 aa).

Positions 13, 14, 33, 85, and 126 each coordinate NAD(+). Arg-160, Val-161, Lys-212, Asn-216, Arg-219, His-250, Arg-252, and Gly-263 together coordinate UDP-N-acetyl-alpha-D-mannosaminouronate. The Proton donor/acceptor role is filled by Lys-212. Cys-266 (nucleophile) is an active-site residue. UDP-N-acetyl-alpha-D-mannosaminouronate-binding residues include Phe-330 and Lys-331. An NAD(+)-binding site is contributed by Arg-338. Lys-416 contributes to the UDP-N-acetyl-alpha-D-mannosaminouronate binding site.

Belongs to the UDP-glucose/GDP-mannose dehydrogenase family. WecC subfamily. Homodimer.

It catalyses the reaction UDP-N-acetyl-alpha-D-mannosamine + 2 NAD(+) + H2O = UDP-N-acetyl-alpha-D-mannosaminouronate + 2 NADH + 3 H(+). The protein operates within bacterial outer membrane biogenesis; enterobacterial common antigen biosynthesis. Its function is as follows. Catalyzes the four-electron oxidation of UDP-N-acetyl-D-mannosamine (UDP-ManNAc), reducing NAD(+) and releasing UDP-N-acetylmannosaminuronic acid (UDP-ManNAcA). The sequence is that of UDP-N-acetyl-D-mannosamine dehydrogenase from Yersinia pestis.